The chain runs to 396 residues: MAEKAHYERTKPHVNIGTIGHVDHGKTTLTAAITKMLADKGLAEAQDYANIDAAPEERERGITINTAHVEYETENRHYAHIDAPGHADYVKNMITGAAQMDGAILVVAATDGPMPQTREHILLAHQVGVDYIIVFLNKTDLVDDDELTDLVEMEVRELLSEYDFPGDDIPVIRGSALGALNGNPDDVKAVEELMATVDEYVPTPERDTDKPFLMPVEDVFTITGRGTVASGRIDRGQVTVGDEVEIIGLKEEIAKTTVTGLEMFRKTLDQGQAGDNIGALLRGIDRESIERGQVLAKPGSIQTHKNFKGEVYILSKDEGGRHTPFFSNYRPQFFFHTTDVTGVIELPEGVEMVMPGDNVTFTVELISPVAIEKGLKFTVREGGRTVGAGVVSEIID.

Residues Lys11–Glu205 enclose the tr-type G domain. The segment at Gly20–Thr27 is G1. Gly20–Thr27 provides a ligand contact to GTP. Thr27 is a binding site for Mg(2+). The G2 stretch occupies residues Gly61–Asn65. The tract at residues Asp82–Gly85 is G3. GTP contacts are provided by residues Asp82–His86 and Asn137–Asp140. Residues Asn137 to Asp140 are G4. The tract at residues Ser175–Leu177 is G5.

The protein belongs to the TRAFAC class translation factor GTPase superfamily. Classic translation factor GTPase family. EF-Tu/EF-1A subfamily. In terms of assembly, monomer.

Its subcellular location is the cytoplasm. It catalyses the reaction GTP + H2O = GDP + phosphate + H(+). In terms of biological role, GTP hydrolase that promotes the GTP-dependent binding of aminoacyl-tRNA to the A-site of ribosomes during protein biosynthesis. The polypeptide is Elongation factor Tu (Latilactobacillus sakei subsp. sakei (strain 23K) (Lactobacillus sakei subsp. sakei)).